The primary structure comprises 366 residues: Carbamoyl phosphate synthase small chain (366 aa).

The CPSase stretch occupies residues 1-171; it reads MKKRKLILED…KPYVVPGRGL (171 aa). Residues Ser46, Gly220, and Gly222 each coordinate L-glutamine. In terms of domain architecture, Glutamine amidotransferase type-1 spans 172 to 359; the sequence is RVVMVDFGAK…LNLIKASKVK (188 aa). Cys247 serves as the catalytic Nucleophile. Leu248, Gln251, Asn289, and Tyr292 together coordinate L-glutamine. Catalysis depends on residues His332 and Glu334.

It belongs to the CarA family. In terms of assembly, composed of two chains; the small (or glutamine) chain promotes the hydrolysis of glutamine to ammonia, which is used by the large (or ammonia) chain to synthesize carbamoyl phosphate. Tetramer of heterodimers (alpha,beta)4.

The enzyme catalyses hydrogencarbonate + L-glutamine + 2 ATP + H2O = carbamoyl phosphate + L-glutamate + 2 ADP + phosphate + 2 H(+). It carries out the reaction L-glutamine + H2O = L-glutamate + NH4(+). The protein operates within amino-acid biosynthesis; L-arginine biosynthesis; carbamoyl phosphate from bicarbonate: step 1/1. It functions in the pathway pyrimidine metabolism; UMP biosynthesis via de novo pathway; (S)-dihydroorotate from bicarbonate: step 1/3. Small subunit of the glutamine-dependent carbamoyl phosphate synthetase (CPSase). CPSase catalyzes the formation of carbamoyl phosphate from the ammonia moiety of glutamine, carbonate, and phosphate donated by ATP, constituting the first step of 2 biosynthetic pathways, one leading to arginine and/or urea and the other to pyrimidine nucleotides. The small subunit (glutamine amidotransferase) binds and cleaves glutamine to supply the large subunit with the substrate ammonia. The sequence is that of Carbamoyl phosphate synthase small chain from Oceanobacillus iheyensis (strain DSM 14371 / CIP 107618 / JCM 11309 / KCTC 3954 / HTE831).